Reading from the N-terminus, the 90-residue chain is DNA-binding protein HU (90 aa).

Threonine 4 carries the post-translational modification Phosphothreonine. Residues 56-90 (AARKGRNPQTGEEMEIPASKVPAFKPGKALKDAVK) form a disordered region.

The protein belongs to the bacterial histone-like protein family. In terms of assembly, homodimer.

Histone-like DNA-binding protein which is capable of wrapping DNA to stabilize it, and thus to prevent its denaturation under extreme environmental conditions. The sequence is that of DNA-binding protein HU (hup) from Geobacillus stearothermophilus (Bacillus stearothermophilus).